Reading from the N-terminus, the 346-residue chain is Probable RNA methyltransferase Pmen_2155 (346 aa).

Residue Glu-91 is the Proton acceptor of the active site. Residues 94 to 320 (LLPRDGLCIS…TKVRNSAGQD (227 aa)) enclose the Radical SAM core domain. Cysteines 101 and 325 form a disulfide. [4Fe-4S] cluster is bound by residues Cys-108, Cys-112, and Cys-115. S-adenosyl-L-methionine-binding positions include 153–154 (GE), Ser-183, 206–208 (SLH), and Asn-282. The active-site S-methylcysteine intermediate is Cys-325.

It belongs to the radical SAM superfamily. RlmN family. [4Fe-4S] cluster serves as cofactor.

It is found in the cytoplasm. This chain is Probable RNA methyltransferase Pmen_2155, found in Ectopseudomonas mendocina (strain ymp) (Pseudomonas mendocina).